Reading from the N-terminus, the 498-residue chain is Lycopene beta cyclase, chloroplastic/chromoplastic (498 aa).

The N-terminal 79 residues, 1–79 (MDTLLRTPNN…ELPMYDPSKG (79 aa)), are a transit peptide targeting the chloroplast and chromoplast. Residue 84–112 (LAVVGGGPAGLAVAQQVSEAGLSVCSIDP) coordinates NAD(+). Positions 293-297 (FLEET) match the FLEET motif motif.

It belongs to the lycopene cyclase family. Monomer. The cofactor is FAD. Requires NADPH as cofactor.

Its subcellular location is the plastid. It localises to the chloroplast. The protein localises to the chromoplast. It catalyses the reaction a carotenoid psi-end group = a carotenoid beta-end derivative. The enzyme catalyses all-trans-lycopene = gamma-carotene. The catalysed reaction is gamma-carotene = all-trans-beta-carotene. It carries out the reaction all-trans-neurosporene = beta-zeacarotene. It catalyses the reaction beta-zeacarotene = 7,8-dihydro-beta-carotene. It functions in the pathway carotenoid biosynthesis; beta-carotene biosynthesis. It participates in carotenoid biosynthesis; beta-zeacarotene biosynthesis. In terms of biological role, catalyzes the double cyclization reaction which converts lycopene to beta-carotene. Catalyzes the double cyclization reaction which converts neurosporene to 7,8-dihydro-beta-carotene. This chain is Lycopene beta cyclase, chloroplastic/chromoplastic, found in Capsicum annuum (Capsicum pepper).